Here is an 822-residue protein sequence, read N- to C-terminus: Valine--tRNA ligase (822 aa).

Residues 41-51 carry the 'HIGH' region motif; the sequence is PNVTGQLHLGH. Residues 511-515 carry the 'KMSKS' region motif; that stretch reads KMSKS. Lysine 514 serves as a coordination point for ATP. The stretch at 765–822 forms a coiled coil; sequence EQKGRELKEIQFLKSEILRAEKILTNKGFLEKAPREKIDLERTKLEKLKEKLAFYEKK.

This sequence belongs to the class-I aminoacyl-tRNA synthetase family. ValS type 1 subfamily. In terms of assembly, monomer.

Its subcellular location is the cytoplasm. The enzyme catalyses tRNA(Val) + L-valine + ATP = L-valyl-tRNA(Val) + AMP + diphosphate. Functionally, catalyzes the attachment of valine to tRNA(Val). As ValRS can inadvertently accommodate and process structurally similar amino acids such as threonine, to avoid such errors, it has a 'posttransfer' editing activity that hydrolyzes mischarged Thr-tRNA(Val) in a tRNA-dependent manner. The polypeptide is Valine--tRNA ligase (Mesomycoplasma hyopneumoniae (strain 7448) (Mycoplasma hyopneumoniae)).